Reading from the N-terminus, the 176-residue chain is HTH-type transcriptional regulator DctR (176 aa).

In terms of domain architecture, HTH luxR-type spans 109–174; the sequence is VPEADVSLSR…ELVRHQHINY (66 aa). The segment at residues 133–152 is a DNA-binding region (H-T-H motif); that stretch reads TEDILEKLKISLKTFYCHKH.

Functionally, may act as a transcriptional regulator of dctA. The sequence is that of HTH-type transcriptional regulator DctR (dctR) from Escherichia coli O6:H1 (strain CFT073 / ATCC 700928 / UPEC).